We begin with the raw amino-acid sequence, 73 residues long: MAKISKFQDKQVEAILNDMIAVLEKHQAPVDLSLVVLGNMVTHLLNSSVGSQQRIVLAKVFSDALMNSVKNSK.

It belongs to the UPF0352 family.

This is UPF0352 protein HSM_0097 from Histophilus somni (strain 2336) (Haemophilus somnus).